A 444-amino-acid chain; its full sequence is ATP-dependent protease ATPase subunit HslU (444 aa).

ATP contacts are provided by residues I20 and 62–67 (GVGKTE). A disordered region spans residues 130 to 158 (EDRILDALVPPPRGASGEPERGEDNSARQ). 3 residues coordinate ATP: D257, E322, and R394.

It belongs to the ClpX chaperone family. HslU subfamily. As to quaternary structure, a double ring-shaped homohexamer of HslV is capped on each side by a ring-shaped HslU homohexamer. The assembly of the HslU/HslV complex is dependent on binding of ATP.

The protein resides in the cytoplasm. In terms of biological role, ATPase subunit of a proteasome-like degradation complex; this subunit has chaperone activity. The binding of ATP and its subsequent hydrolysis by HslU are essential for unfolding of protein substrates subsequently hydrolyzed by HslV. HslU recognizes the N-terminal part of its protein substrates and unfolds these before they are guided to HslV for hydrolysis. This Bordetella bronchiseptica (strain ATCC BAA-588 / NCTC 13252 / RB50) (Alcaligenes bronchisepticus) protein is ATP-dependent protease ATPase subunit HslU.